Here is a 2190-residue protein sequence, read N- to C-terminus: Highly-reducing polyketide synthase 1 (2190 aa).

Positions Leu-6 to Ala-431 constitute a Ketosynthase family 3 (KS3) domain. Active-site for beta-ketoacyl synthase activity residues include Cys-179, His-315, and His-355. The Malonyl-CoA:ACP transacylase (MAT) domain occupies Phe-541 to Ala-857. The N-terminal hotdog fold stretch occupies residues Asn-925–Ala-1061. The PKS/mFAS DH domain maps to Asn-925 to Ser-1246. His-957 acts as the Proton acceptor; for dehydratase activity in catalysis. Positions Thr-1089–Ser-1246 are C-terminal hotdog fold. Asp-1154 (proton donor; for dehydratase activity) is an active-site residue. The Enoyl reductase (ER) domain maps to Gly-1494–Ile-1804. Positions Ala-1828–Ser-2005 constitute a Ketoreductase (KR) domain. Residues Lys-2107–Ser-2184 enclose the Carrier domain. Ser-2144 is subject to O-(pantetheine 4'-phosphoryl)serine.

The cofactor is pantetheine 4'-phosphate.

Its function is as follows. Highly-reducing polyketide synthase; part of the gene cluster that mediates the biosynthesis of liamocins, glycolipids (also called heavy oils) composed of a single mannitol or arabitol headgroup linked to either three, four or even six 3,5-dihydroxydecanoic ester tail-groups. Within the pathway, PKS1 is responsible for biosynthesis of 3,5-dihydroxydecanoic acid from acetyl-CoA and malonyl-CoA. A phosphopantetheine transferase (PPTase) activates the HR-PKS. The esterase EST1 then catalyzes ester bond formation between 3,5-dihydroxydecanoic acid and mannitol (provided by the mannitol-1-phosphate 5-dehydrogenase and the NADP-dependent mannitol dehydrogenase) or arabinol (provided by the L-arabinitol 4-dehydrogenase). This chain is Highly-reducing polyketide synthase 1, found in Aureobasidium melanogenum (Aureobasidium pullulans var. melanogenum).